The following is a 365-amino-acid chain: Putative F-box protein At1g31000 (365 aa).

In terms of domain architecture, F-box spans 15–62 (NDSDSVRIDIVIEIVKRLPLKDVSRFLLVSKLWSEIIRSPYFIRSFPF).

The protein is Putative F-box protein At1g31000 of Arabidopsis thaliana (Mouse-ear cress).